Reading from the N-terminus, the 64-residue chain is Putative H/ACA ribonucleoprotein complex subunit 3 (64 aa).

Belongs to the NOP10 family. In terms of assembly, component of the small nucleolar ribonucleoprotein particles containing H/ACA-type snoRNAs (H/ACA snoRNPs).

It is found in the nucleus. It localises to the nucleolus. In terms of biological role, required for ribosome biogenesis. Part of a complex which catalyzes pseudouridylation of rRNA. This involves the isomerization of uridine such that the ribose is subsequently attached to C5, instead of the normal N1. Pseudouridine ('psi') residues may serve to stabilize the conformation of rRNAs. The sequence is that of Putative H/ACA ribonucleoprotein complex subunit 3 (nola-3) from Caenorhabditis elegans.